The chain runs to 221 residues: RNA pyrophosphohydrolase (221 aa).

Residues G6–T149 enclose the Nudix hydrolase domain. Positions G38 to G59 match the Nudix box motif.

It belongs to the Nudix hydrolase family. RppH subfamily. A divalent metal cation serves as cofactor.

Functionally, accelerates the degradation of transcripts by removing pyrophosphate from the 5'-end of triphosphorylated RNA, leading to a more labile monophosphorylated state that can stimulate subsequent ribonuclease cleavage. The protein is RNA pyrophosphohydrolase of Verminephrobacter eiseniae (strain EF01-2).